The sequence spans 219 residues: UPF0502 protein GSU0233 (219 aa).

Belongs to the UPF0502 family.

This chain is UPF0502 protein GSU0233, found in Geobacter sulfurreducens (strain ATCC 51573 / DSM 12127 / PCA).